We begin with the raw amino-acid sequence, 274 residues long: NH(3)-dependent NAD(+) synthetase (274 aa).

46-53 serves as a coordination point for ATP; sequence GISGGQDS. A Mg(2+)-binding site is contributed by Asp52. Arg140 is a binding site for deamido-NAD(+). An ATP-binding site is contributed by Thr160. Glu165 contacts Mg(2+). Residues Lys173 and Asp180 each coordinate deamido-NAD(+). Positions 189 and 211 each coordinate ATP. Residue 260-261 participates in deamido-NAD(+) binding; the sequence is HK.

The protein belongs to the NAD synthetase family. Homodimer.

It catalyses the reaction deamido-NAD(+) + NH4(+) + ATP = AMP + diphosphate + NAD(+) + H(+). It functions in the pathway cofactor biosynthesis; NAD(+) biosynthesis; NAD(+) from deamido-NAD(+) (ammonia route): step 1/1. Its function is as follows. Catalyzes the ATP-dependent amidation of deamido-NAD to form NAD. Uses ammonia as a nitrogen source. The chain is NH(3)-dependent NAD(+) synthetase from Listeria innocua serovar 6a (strain ATCC BAA-680 / CLIP 11262).